The sequence spans 269 residues: Diaminopimelate epimerase (269 aa).

Substrate contacts are provided by asparagine 20 and asparagine 63. Cysteine 72 serves as the catalytic Proton donor. Substrate-binding positions include 73 to 74 (GN), asparagine 179, and 197 to 198 (ER). Residue cysteine 207 is the Proton acceptor of the active site. 208 to 209 (GT) contacts substrate.

Belongs to the diaminopimelate epimerase family. As to quaternary structure, homodimer.

It is found in the cytoplasm. It carries out the reaction (2S,6S)-2,6-diaminopimelate = meso-2,6-diaminopimelate. It participates in amino-acid biosynthesis; L-lysine biosynthesis via DAP pathway; DL-2,6-diaminopimelate from LL-2,6-diaminopimelate: step 1/1. In terms of biological role, catalyzes the stereoinversion of LL-2,6-diaminopimelate (L,L-DAP) to meso-diaminopimelate (meso-DAP), a precursor of L-lysine and an essential component of the bacterial peptidoglycan. In Chlamydia muridarum (strain MoPn / Nigg), this protein is Diaminopimelate epimerase.